Here is a 95-residue protein sequence, read N- to C-terminus: Glycophorin-C (95 aa).

The Extracellular portion of the chain corresponds to Met1–Glu25. Residues Ile26–Leu46 form a helical; Signal-anchor for type III membrane protein membrane-spanning segment. Residues Met47–Ile95 are Cytoplasmic-facing. Ser71, Ser78, and Ser89 each carry phosphoserine.

Belongs to the glycophorin-C family.

The protein localises to the cell membrane. This is Glycophorin-C (Gypc) from Rattus norvegicus (Rat).